The sequence spans 98 residues: DNA-directed RNA polymerase subunit omega (98 aa).

Belongs to the RNA polymerase subunit omega family. As to quaternary structure, the RNAP catalytic core consists of 2 alpha, 1 beta, 1 beta' and 1 omega subunit. When a sigma factor is associated with the core the holoenzyme is formed, which can initiate transcription.

The catalysed reaction is RNA(n) + a ribonucleoside 5'-triphosphate = RNA(n+1) + diphosphate. Functionally, promotes RNA polymerase assembly. Latches the N- and C-terminal regions of the beta' subunit thereby facilitating its interaction with the beta and alpha subunits. The protein is DNA-directed RNA polymerase subunit omega of Xylella fastidiosa (strain M12).